A 96-amino-acid chain; its full sequence is MEQAPADQGPQREPYNEWALELLEELKSEAVRHFPRIWLHSLGQHIYETYGDTWVGVEAIIRILQQLLFIHFRIGCQHSRIGIIRQRRARNGSSRS.

The tract at residues methionine 1–leucine 42 is homooligomerization. Phosphoserine; by host is present on residues serine 79, serine 94, and serine 96.

The protein belongs to the HIV-1 VPR protein family. Homooligomer, may form homodimer. Interacts with p6-gag region of the Pr55 Gag precursor protein through a (Leu-X-X)4 motif near the C-terminus of the P6gag protein. Interacts with host UNG. May interact with host RAD23A/HHR23A. Interacts with host VPRBP/DCAF1, leading to hijack the CUL4A-RBX1-DDB1-DCAF1/VPRBP complex, mediating ubiquitination of host proteins such as TERT and ZGPAT and arrest of the cell cycle in G2 phase. Phosphorylated on several residues by host. These phosphorylations regulate VPR activity for the nuclear import of the HIV-1 pre-integration complex.

It is found in the virion. The protein resides in the host nucleus. Its subcellular location is the host extracellular space. During virus replication, may deplete host UNG protein, and incude G2-M cell cycle arrest. Acts by targeting specific host proteins for degradation by the 26S proteasome, through association with the cellular CUL4A-DDB1 E3 ligase complex by direct interaction with host VPRPB/DCAF-1. Cell cycle arrest reportedly occurs within hours of infection and is not blocked by antiviral agents, suggesting that it is initiated by the VPR carried into the virion. Additionally, VPR induces apoptosis in a cell cycle dependent manner suggesting that these two effects are mechanistically linked. Detected in the serum and cerebrospinal fluid of AIDS patient, VPR may also induce cell death to bystander cells. Its function is as follows. During virus entry, plays a role in the transport of the viral pre-integration (PIC) complex to the host nucleus. This function is crucial for viral infection of non-dividing macrophages. May act directly at the nuclear pore complex, by binding nucleoporins phenylalanine-glycine (FG)-repeat regions. This Human immunodeficiency virus type 1 group M subtype D (isolate ELI) (HIV-1) protein is Protein Vpr.